The chain runs to 201 residues: Retinol-binding protein 4 (201 aa).

Positions 1–18 (MEWVWALVLLAALGGGSA) are cleaved as a signal peptide. 3 disulfide bridges follow: Cys22/Cys178, Cys88/Cys192, and Cys138/Cys147. Gln116 serves as a coordination point for substrate. Arg139 is subject to Omega-N-methylarginine.

The protein belongs to the calycin superfamily. Lipocalin family. Interacts with TTR. Interaction with TTR prevents its loss by filtration through the kidney glomeruli. Interacts with STRA6.

It is found in the secreted. Functionally, retinol-binding protein that mediates retinol transport in blood plasma. Delivers retinol from the liver stores to the peripheral tissues. Transfers the bound all-trans retinol to STRA6, that then facilitates retinol transport across the cell membrane. The chain is Retinol-binding protein 4 (Rbp4) from Mus musculus (Mouse).